The primary structure comprises 346 residues: Holliday junction branch migration complex subunit RuvB (346 aa).

The large ATPase domain (RuvB-L) stretch occupies residues 1–182 (MSEPARLISP…FGIPVRLSFY (182 aa)). Residues leucine 21, arginine 22, glycine 63, lysine 66, threonine 67, threonine 68, 129–131 (EDF), arginine 172, tyrosine 182, and arginine 219 each bind ATP. Position 67 (threonine 67) interacts with Mg(2+). The interval 183-253 (TVEELELIVR…IADEALTRLL (71 aa)) is small ATPAse domain (RuvB-S). A head domain (RuvB-H) region spans residues 256-346 (NVGFDQLDKR…AQFRLFQEDN (91 aa)). The DNA site is built by arginine 292, arginine 311, and arginine 316.

It belongs to the RuvB family. As to quaternary structure, homohexamer. Forms an RuvA(8)-RuvB(12)-Holliday junction (HJ) complex. HJ DNA is sandwiched between 2 RuvA tetramers; dsDNA enters through RuvA and exits via RuvB. An RuvB hexamer assembles on each DNA strand where it exits the tetramer. Each RuvB hexamer is contacted by two RuvA subunits (via domain III) on 2 adjacent RuvB subunits; this complex drives branch migration. In the full resolvosome a probable DNA-RuvA(4)-RuvB(12)-RuvC(2) complex forms which resolves the HJ.

The protein resides in the cytoplasm. It catalyses the reaction ATP + H2O = ADP + phosphate + H(+). Functionally, the RuvA-RuvB-RuvC complex processes Holliday junction (HJ) DNA during genetic recombination and DNA repair, while the RuvA-RuvB complex plays an important role in the rescue of blocked DNA replication forks via replication fork reversal (RFR). RuvA specifically binds to HJ cruciform DNA, conferring on it an open structure. The RuvB hexamer acts as an ATP-dependent pump, pulling dsDNA into and through the RuvAB complex. RuvB forms 2 homohexamers on either side of HJ DNA bound by 1 or 2 RuvA tetramers; 4 subunits per hexamer contact DNA at a time. Coordinated motions by a converter formed by DNA-disengaged RuvB subunits stimulates ATP hydrolysis and nucleotide exchange. Immobilization of the converter enables RuvB to convert the ATP-contained energy into a lever motion, pulling 2 nucleotides of DNA out of the RuvA tetramer per ATP hydrolyzed, thus driving DNA branch migration. The RuvB motors rotate together with the DNA substrate, which together with the progressing nucleotide cycle form the mechanistic basis for DNA recombination by continuous HJ branch migration. Branch migration allows RuvC to scan DNA until it finds its consensus sequence, where it cleaves and resolves cruciform DNA. This Rhizobium johnstonii (strain DSM 114642 / LMG 32736 / 3841) (Rhizobium leguminosarum bv. viciae) protein is Holliday junction branch migration complex subunit RuvB.